The sequence spans 349 residues: Terpene synthase 2 (349 aa).

Positions 84-89 match the DDxx(x)D/E motif motif; sequence DDLFDG. The short motif at 229–237 is the NDxxSxxxD/E motif element; that stretch reads NDCVSYEKE.

The protein belongs to the terpene synthase family.

The catalysed reaction is (2E,6E)-farnesyl diphosphate = (3S)-(+)-asterisca-2(9),6-diene + diphosphate. It catalyses the reaction (2E)-geranyl diphosphate = (Z)-beta-ocimene + diphosphate. It carries out the reaction (2E)-geranyl diphosphate + H2O = linalool + diphosphate. Terpene synthase that converts its substrate farnesyl diphosphate (FPP) into the sesquiterpene (3S)-(+)-asterisca-2(9),6-diene. Is also able to convert geranyl diphosphate (GPP) into a mixture of monoterpenes including (Z)-beta-ocimene, allo-ocimene and linalool. This Dictyostelium discoideum (Social amoeba) protein is Terpene synthase 2.